The sequence spans 639 residues: Bucky ball (639 aa).

Basic and acidic residues predominate over residues 178 to 187 (ATKECKEDPV). 3 disordered regions span residues 178-205 (ATKE…SSQG), 218-242 (LDSS…EPQT), and 581-614 (RSWR…RSEY). The segment covering 189–205 (RPTTYSDSAYDAESSQG) has biased composition (polar residues). The segment covering 225 to 240 (EEEEEEEKDVNEEDEP) has biased composition (acidic residues). The span at 584–593 (RQVTGPQDQG) shows a compositional bias: polar residues. A compositionally biased stretch (basic residues) spans 596 to 609 (PLRRSTCKSIHQQR). A symmetric dimethylarginine mark is found at Arg627 and Arg629. 3 short sequence motifs (RG Motif) span residues 627 to 628 (RG), 629 to 630 (RG), and 635 to 636 (RG).

Specifically interacts (when methylated) with tdrd6 (via Tudor domain); interaction is responsible for recruitment of different protein complexes to germ plasm. Interacts with rbpms2 and dazl; interaction mediates Balbiani body formation. Interacts with kif5ba; interaction leads to buc enrichment at the embryonic cleavage furrows and mediates dorsoventral patterning. In terms of processing, symmetric dimethylarginine modification promotes interaction with tdrd6.

It is found in the cytoplasm. Its subcellular location is the cleavage furrow. Its function is as follows. Prion-like protein required for the formation of Balbiani body (electron-dense aggregates in the oocyte) and germ plasm assembly, and for the establishment of oocyte polarity during early oogenesis. Mobility and aggregation properties are improved by tudor domain-containing protein tdrd6 through interaction with dimethylated arginines Tri-RG domains. Establishes oocyte polarity through interactions with RNA-binding proteins rbpms2 and dazl, initiating a positive feedback loop amplification mechanism in the Balbiani body. Interaction of BUC protein and mRNA with rbpms2 and dazl is required to mediate Balbiani body formation. Involved in recruitment of germ plasm to embryonic cleavage furrows and dorsoventral patterning through interaction with Kinesin-1/KIF5BA. In Danio rerio (Zebrafish), this protein is Bucky ball.